A 442-amino-acid polypeptide reads, in one-letter code: tRNA-2-methylthio-N(6)-dimethylallyladenosine synthase (442 aa).

In terms of domain architecture, MTTase N-terminal spans 2 to 117 (KSLYIKTYGC…LPELIVKASR (116 aa)). [4Fe-4S] cluster contacts are provided by Cys11, Cys47, Cys80, Cys157, Cys161, and Cys164. Positions 143 to 374 (NSQGSSAFLS…QKLINKQQLE (232 aa)) constitute a Radical SAM core domain. Positions 377–441 (QSMVGKTIPV…QNSLLGRELQ (65 aa)) constitute a TRAM domain.

The protein belongs to the methylthiotransferase family. MiaB subfamily. Monomer. It depends on [4Fe-4S] cluster as a cofactor.

The protein localises to the cytoplasm. It catalyses the reaction N(6)-dimethylallyladenosine(37) in tRNA + (sulfur carrier)-SH + AH2 + 2 S-adenosyl-L-methionine = 2-methylsulfanyl-N(6)-dimethylallyladenosine(37) in tRNA + (sulfur carrier)-H + 5'-deoxyadenosine + L-methionine + A + S-adenosyl-L-homocysteine + 2 H(+). In terms of biological role, catalyzes the methylthiolation of N6-(dimethylallyl)adenosine (i(6)A), leading to the formation of 2-methylthio-N6-(dimethylallyl)adenosine (ms(2)i(6)A) at position 37 in tRNAs that read codons beginning with uridine. This Wolbachia sp. subsp. Brugia malayi (strain TRS) protein is tRNA-2-methylthio-N(6)-dimethylallyladenosine synthase.